We begin with the raw amino-acid sequence, 759 residues long: Solute carrier family 26 member 6 (759 aa).

The Cytoplasmic segment spans residues 1 to 115; it reads MGLADASGPR…PQGLAYALLA (115 aa). Residues 116 to 136 traverse the membrane as a helical segment; sequence GLPPVFGLYSSFYPVFIYFLF. At 137-186 the chain is on the extracellular side; the sequence is GTSRHISVGTFAVMSVMVGSVTESLAPQALNDSMINETARDAARVQVAST. N-linked (GlcNAc) asparagine glycans are attached at residues Asn167 and Asn172. A helical membrane pass occupies residues 187–207; it reads LSVLVGLFQVGLGLIHFGFVV. The Cytoplasmic segment spans residues 208 to 263; that stretch reads TYLSEPLVRGYTTAAAVQVFVSQLKYVFGLHLSSHSGPLSLIYTVLEVCWKLPQSK. The helical transmembrane segment at 264–284 threads the bilayer; sequence VGTVVTAAVAGVVLVVVKLLN. Topologically, residues 285 to 293 are extracellular; it reads DKLQQQLPM. A helical membrane pass occupies residues 294-314; sequence PIPGELLTLIGATGISYGMGL. At 315–347 the chain is on the cytoplasmic side; that stretch reads KHRFEVDVVGNIPAGLVPPVAPNTQLFSKLVGS. Residues 348–368 form a helical membrane-spanning segment; the sequence is AFTIAVVGFAIAISLGKIFAL. At 369–379 the chain is on the extracellular side; that stretch reads RHGYRVDSNQE. The helical transmembrane segment at 380-400 threads the bilayer; the sequence is LVALGLSNLIGGIFQCFPVSC. The Cytoplasmic segment spans residues 401–416; it reads SMSRSLVQESTGGNSQ. Residues 417 to 437 traverse the membrane as a helical segment; it reads VAGAISSLFILLIIVKLGELF. At 438–484 the chain is on the extracellular side; it reads HDLPKAVLAAIIIVNLKGMLRQLSDMRSLWKANRADLLIWLVTFTAT. The helical transmembrane segment at 485–505 threads the bilayer; the sequence is ILLNLDLGLVVAVIFSLLLVV. Residues 506–759 are Cytoplasmic-facing; the sequence is VRTQMPHYSV…PDSPVSVTRL (254 aa). The STAS domain maps to 530–742; the sequence is EYSEAKEVRG…ASVHDAVTFA (213 aa). A phosphoserine; by PKC mark is found at Asn553 and Lys582. Ser616 carries the phosphoserine modification. A disordered region spans residues 636 to 657; the sequence is GDKMEDATANGQEDSKAPDGST. Phosphoserine occurs at positions 752 and 755.

This sequence belongs to the SLC26A/SulP transporter (TC 2.A.53) family. Interacts (via C-terminal domain) with PDZK1 (via C-terminal PDZ domain); the interaction induces chloride and oxalate exchange transport. Interacts with CFTR and SLC26A3. Interacts with AHCYL1; the interaction increases SLC26A6 activity. As to quaternary structure, interacts with NHERF1 (via the PDZ domains) and NHERF2 (via the PDZ domains). Interacts (via C-terminal cytoplasmic domain) with CA2; the interaction stimulates chloride-bicarbonate exchange activity. In terms of assembly, interacts with NHERF1 (via the PDZ domains) and NHERF2 (via the PDZ domains). Phosphorylated on serine residues by PKC; the phosphorylation disrupts interaction with carbonic anhydrase CA2 and reduces bicarbonate transport activity in a phorbol myristate acetate (PMA)-induced manner. In terms of processing, glycosylation at Asn-167 and Asn-172 positively regulates its chloride oxalate exchanger activity. In terms of tissue distribution, ubiquitous. Highest levels in kidney and pancreas. Lower expression in heart, skeletal muscle, liver and placenta. Also found in lung and brain. As to expression, ubiquitously expressed. Highest levels expressed in the kidney and pancreas. Expressed weakly in placenta, lung, liver and pancreas. In terms of tissue distribution, expressed in heart, brain, placenta, lung, liver, kidney, pancreas, spleen, thymus, prostate, testis and ovary.

It is found in the cell membrane. The protein resides in the apical cell membrane. The protein localises to the cytoplasmic vesicle membrane. Its subcellular location is the microsome. It localises to the basolateral cell membrane. The enzyme catalyses 2 hydrogencarbonate(in) + chloride(out) = 2 hydrogencarbonate(out) + chloride(in). It carries out the reaction oxalate(in) + chloride(out) = oxalate(out) + chloride(in). It catalyses the reaction oxalate(in) + formate(out) = oxalate(out) + formate(in). The catalysed reaction is oxalate(in) + sulfate(out) = oxalate(out) + sulfate(in). The enzyme catalyses 2 hydrogencarbonate(out) + sulfate(in) = 2 hydrogencarbonate(in) + sulfate(out). Its activity is regulated as follows. Oxalate transport activity is inhibited by 4,4'-diisothiocyanatostilbene-2,2'-disulfonic acid (DIDS). With respect to regulation, chloride, bicarbonate and sulfate transport activities are inhibited by 4,4'-diisothiocyanatostilbene-2,2'-disulfonic acid (DIDS). Its function is as follows. Apical membrane anion-exchanger with wide epithelial distribution that plays a role as a component of the pH buffering system for maintaining acid-base homeostasis. Acts as a versatile DIDS-sensitive inorganic and organic anion transporter that mediates the uptake of monovalent anions like chloride, bicarbonate, formate and hydroxyl ion and divalent anions like sulfate and oxalate. Functions in multiple exchange modes involving pairs of these anions, which include chloride-bicarbonate, chloride-oxalate, oxalate-formate, oxalate-sulfate and chloride-formate exchange. Apical membrane chloride-bicarbonate exchanger that mediates luminal chloride absorption and bicarbonate secretion by the small intestinal brush border membrane and contributes to intracellular pH regulation in the duodenal upper villous epithelium during proton-coupled peptide absorption, possibly by providing a bicarbonate import pathway. Also mediates intestinal chloride absorption and oxalate secretion, thereby preventing hyperoxaluria and calcium oxalate urolithiasis. Transepithelial oxalate secretion, chloride-formate, chloride-oxalate and chloride-bicarbonate transport activities in the duodenum are inhibited by PKC activation in a calcium-independent manner. The apical membrane chloride-bicarbonate exchanger also provides a major route for fluid and bicarbonate secretion into the proximal tubules of the kidney as well as into the proximal part of the interlobular pancreatic ductal tree, where it mediates electrogenic chloride-bicarbonate exchange with a chloride-bicarbonate stoichiometry of 1:2, and hence will dilute and alkalinize protein-rich acinar secretion. Also mediates the transcellular sulfate absorption and oxalate secretion across the apical membrane in the duodenum and the formate ion efflux at the apical brush border of cells in the proximal tubules of kidney. Plays a role in sperm capacitation by increasing intracellular pH. In terms of biological role, apical membrane chloride-bicarbonate exchanger. Its association with carbonic anhydrase CA2 forms a bicarbonate transport metabolon; hence maximizes the local concentration of bicarbonate at the transporter site. This is Solute carrier family 26 member 6 (SLC26A6) from Homo sapiens (Human).